The chain runs to 338 residues: Secretory carrier-associated membrane protein 1 (338 aa).

Positions 1–64 (MSDFDSNPFA…NVPNTQPAIM (64 aa)) are disordered. The residue at position 2 (S2) is an N-acetylserine. S2 carries the post-translational modification Phosphoserine. Residues 2-155 (SDFDSNPFAD…QKTVKLMYYL (154 aa)) are Cytoplasmic-facing. A Phosphothreonine modification is found at T45. A helical transmembrane segment spans residues 156-176 (WMFHAVTLFLNIFGCLAWFCV). At 177 to 181 (DSARA) the chain is on the lumenal side. A helical transmembrane segment spans residues 182 to 202 (VDFGLSILWFLLFTPCSFVCW). Over 203-218 (YRPLYGAFRSDSSFRF) the chain is Cytoplasmic. Residues 219–239 (FVFFFVYICQFAVHVLQAAGF) form a helical membrane-spanning segment. The Lumenal segment spans residues 240–261 (HNWGNCGWISSLTGLNQNIPVG). Residues 262–282 (IMMIIIAALFTASAVISLVMF) traverse the membrane as a helical segment. The Cytoplasmic segment spans residues 283-338 (KKVHGLYRTTGASFEKAQQEFATGVMSNKTVQTAAANAASTAASSAAQNAFKGNQI).

This sequence belongs to the SCAMP family. Interacts with SYNRG and ITSN1. Interacts with SLC9A7. As to expression, widely expressed, with highest expression in brain.

Its subcellular location is the golgi apparatus. The protein localises to the trans-Golgi network membrane. The protein resides in the recycling endosome membrane. Its function is as follows. Functions in post-Golgi recycling pathways. Acts as a recycling carrier to the cell surface. The polypeptide is Secretory carrier-associated membrane protein 1 (SCAMP1) (Homo sapiens (Human)).